The chain runs to 362 residues: Phosphoserine aminotransferase (362 aa).

L-glutamate-binding residues include S9 and R42. Pyridoxal 5'-phosphate contacts are provided by residues 76–77 (GR), W102, T153, D174, and Q197. Position 198 is an N6-(pyridoxal phosphate)lysine (K198). 239-240 (NT) lines the pyridoxal 5'-phosphate pocket.

This sequence belongs to the class-V pyridoxal-phosphate-dependent aminotransferase family. SerC subfamily. In terms of assembly, homodimer. It depends on pyridoxal 5'-phosphate as a cofactor.

The protein resides in the cytoplasm. The enzyme catalyses O-phospho-L-serine + 2-oxoglutarate = 3-phosphooxypyruvate + L-glutamate. It catalyses the reaction 4-(phosphooxy)-L-threonine + 2-oxoglutarate = (R)-3-hydroxy-2-oxo-4-phosphooxybutanoate + L-glutamate. It participates in amino-acid biosynthesis; L-serine biosynthesis; L-serine from 3-phospho-D-glycerate: step 2/3. The protein operates within cofactor biosynthesis; pyridoxine 5'-phosphate biosynthesis; pyridoxine 5'-phosphate from D-erythrose 4-phosphate: step 3/5. In terms of biological role, catalyzes the reversible conversion of 3-phosphohydroxypyruvate to phosphoserine and of 3-hydroxy-2-oxo-4-phosphonooxybutanoate to phosphohydroxythreonine. This chain is Phosphoserine aminotransferase, found in Escherichia fergusonii (strain ATCC 35469 / DSM 13698 / CCUG 18766 / IAM 14443 / JCM 21226 / LMG 7866 / NBRC 102419 / NCTC 12128 / CDC 0568-73).